We begin with the raw amino-acid sequence, 1428 residues long: DNA-directed RNA polymerase subunit beta' (1428 aa).

The Zn(2+) site is built by cysteine 66, cysteine 68, cysteine 81, and cysteine 84. Positions 472, 474, and 476 each coordinate Mg(2+). Residues cysteine 816, cysteine 890, cysteine 897, and cysteine 900 each contribute to the Zn(2+) site.

It belongs to the RNA polymerase beta' chain family. As to quaternary structure, the RNAP catalytic core consists of 2 alpha, 1 beta, 1 beta' and 1 omega subunit. When a sigma factor is associated with the core the holoenzyme is formed, which can initiate transcription. Requires Mg(2+) as cofactor. Zn(2+) is required as a cofactor.

It catalyses the reaction RNA(n) + a ribonucleoside 5'-triphosphate = RNA(n+1) + diphosphate. Functionally, DNA-dependent RNA polymerase catalyzes the transcription of DNA into RNA using the four ribonucleoside triphosphates as substrates. The sequence is that of DNA-directed RNA polymerase subunit beta' from Phocaeicola vulgatus (strain ATCC 8482 / DSM 1447 / JCM 5826 / CCUG 4940 / NBRC 14291 / NCTC 11154) (Bacteroides vulgatus).